The sequence spans 350 residues: Farnesyl pyrophosphate synthase (350 aa).

Residues Lys55, Arg58, and Gln94 each contribute to the isopentenyl diphosphate site. Asp101 and Asp105 together coordinate Mg(2+). Arg110 is a binding site for dimethylallyl diphosphate. Position 111 (Arg111) interacts with isopentenyl diphosphate. Dimethylallyl diphosphate contacts are provided by Lys198, Thr199, Gln237, Lys254, and Lys263.

Belongs to the FPP/GGPP synthase family. Mg(2+) serves as cofactor.

Its subcellular location is the cytoplasm. The catalysed reaction is isopentenyl diphosphate + dimethylallyl diphosphate = (2E)-geranyl diphosphate + diphosphate. The enzyme catalyses isopentenyl diphosphate + (2E)-geranyl diphosphate = (2E,6E)-farnesyl diphosphate + diphosphate. It functions in the pathway isoprenoid biosynthesis; farnesyl diphosphate biosynthesis; farnesyl diphosphate from geranyl diphosphate and isopentenyl diphosphate: step 1/1. Its pathway is isoprenoid biosynthesis; geranyl diphosphate biosynthesis; geranyl diphosphate from dimethylallyl diphosphate and isopentenyl diphosphate: step 1/1. Catalyzes the sequential condensation of isopentenyl pyrophosphate with the allylic pyrophosphates, dimethylallyl pyrophosphate, and then with the resultant geranylpyrophosphate to the ultimate product farnesyl pyrophosphate. This Zea mays (Maize) protein is Farnesyl pyrophosphate synthase (FPS).